We begin with the raw amino-acid sequence, 437 residues long: Cobyrinate a,c-diamide synthase (437 aa).

The 190-residue stretch at 241-430 folds into the GATase cobBQ-type domain; that stretch reads KIAVAKDEAF…AHVHFFGNLD (190 aa). Residue cysteine 323 is the Nucleophile of the active site.

This sequence belongs to the CobB/CbiA family. It depends on Mg(2+) as a cofactor.

The enzyme catalyses cob(II)yrinate + 2 L-glutamine + 2 ATP + 2 H2O = cob(II)yrinate a,c diamide + 2 L-glutamate + 2 ADP + 2 phosphate + 2 H(+). The protein operates within cofactor biosynthesis; adenosylcobalamin biosynthesis; cob(II)yrinate a,c-diamide from sirohydrochlorin (anaerobic route): step 10/10. In terms of biological role, catalyzes the ATP-dependent amidation of the two carboxylate groups at positions a and c of cobyrinate, using either L-glutamine or ammonia as the nitrogen source. This is Cobyrinate a,c-diamide synthase from Clostridium acetobutylicum (strain ATCC 824 / DSM 792 / JCM 1419 / IAM 19013 / LMG 5710 / NBRC 13948 / NRRL B-527 / VKM B-1787 / 2291 / W).